The primary structure comprises 156 residues: Transcription antitermination protein NusB (156 aa).

The protein belongs to the NusB family.

Its function is as follows. Involved in transcription antitermination. Required for transcription of ribosomal RNA (rRNA) genes. Binds specifically to the boxA antiterminator sequence of the ribosomal RNA (rrn) operons. The sequence is that of Transcription antitermination protein NusB from Rickettsia rickettsii (strain Iowa).